The following is a 596-amino-acid chain: Pentatricopeptide repeat-containing protein At1g80270, mitochondrial (596 aa).

The N-terminal 69 residues, 1 to 69 (MFALSKVLRR…RALSSSAGTK (69 aa)), are a transit peptide targeting the mitochondrion. The tract at residues 62 to 119 (LSSSAGTKSDQEEDDLEDGFSELEGSKSGQGSTSSDEDEGKLSADEEEEEELDLIETD) is disordered. Acidic residues-rich tracts occupy residues 72–82 (QEEDDLEDGFS) and 96–117 (SDED…DLIE). PPR repeat units lie at residues 228–262 (GEVL…GFPL), 263–296 (SGFT…NIKP), 297–331 (SLLT…GVEL), 332–366 (DFQT…SLEA), 367–397 (NRRA…CESK), 399–433 (YFEE…DRRA), 434–468 (SSST…GCRI), 469–503 (EATT…SHTK), and 505–539 (MMNS…GYTS).

It belongs to the PPR family. P subfamily.

Its subcellular location is the mitochondrion. In Arabidopsis thaliana (Mouse-ear cress), this protein is Pentatricopeptide repeat-containing protein At1g80270, mitochondrial.